The primary structure comprises 184 residues: ATP-dependent protease subunit HslV (184 aa).

Threonine 12 is a catalytic residue. Na(+)-binding residues include alanine 166, cysteine 169, and threonine 172.

This sequence belongs to the peptidase T1B family. HslV subfamily. As to quaternary structure, a double ring-shaped homohexamer of HslV is capped on each side by a ring-shaped HslU homohexamer. The assembly of the HslU/HslV complex is dependent on binding of ATP.

It is found in the cytoplasm. It carries out the reaction ATP-dependent cleavage of peptide bonds with broad specificity.. Its activity is regulated as follows. Allosterically activated by HslU binding. Functionally, protease subunit of a proteasome-like degradation complex believed to be a general protein degrading machinery. This is ATP-dependent protease subunit HslV from Nitrobacter winogradskyi (strain ATCC 25391 / DSM 10237 / CIP 104748 / NCIMB 11846 / Nb-255).